Here is a 60-residue protein sequence, read N- to C-terminus: Cytotoxin 5 (60 aa).

4 disulfide bridges follow: cysteine 3/cysteine 21, cysteine 14/cysteine 38, cysteine 42/cysteine 53, and cysteine 54/cysteine 59.

It belongs to the three-finger toxin family. Short-chain subfamily. Type IA cytotoxin sub-subfamily. In terms of assembly, monomer in solution; Homodimer and oligomer in the presence of negatively charged lipids forming a pore with a size ranging between 20 and 30 Angstroms. As to expression, expressed by the venom gland.

It localises to the secreted. It is found in the target cell membrane. Shows cytolytic activity on many different cells by forming pore in lipid membranes. In vivo, increases heart rate or kills the animal by cardiac arrest. In addition, it binds to heparin with high affinity, interacts with Kv channel-interacting protein 1 (KCNIP1) in a calcium-independent manner, and binds to integrin alpha-V/beta-3 (ITGAV/ITGB3) with moderate affinity. This Naja mossambica (Mozambique spitting cobra) protein is Cytotoxin 5.